An 827-amino-acid chain; its full sequence is Periplasmic nitrate reductase (827 aa).

Residues 1 to 32 constitute a signal peptide (tat-type signal); the sequence is MELNRRDFMKANAAAAAALAAGITLPVKNVYA. Residues 37 to 93 enclose the 4Fe-4S Mo/W bis-MGD-type domain; sequence IKWDKAPCRFCGTGCSVLVGTQNGRMVASQGDPDAEVNRGLNCIKGYFLPKIIYGKD. [4Fe-4S] cluster is bound by residues Cys44, Cys47, Cys51, and Cys79. Mo-bis(molybdopterin guanine dinucleotide)-binding positions include Lys81, Gln148, Asn173, Cys177, 210–217, 241–245, Met371, Gln375, Asn481, 507–508, Lys530, Asp557, and 717–726; these read WGSNMAEM, STFEH, SD, and TGRVLEHWHS. Residue Phe793 participates in substrate binding. Mo-bis(molybdopterin guanine dinucleotide) contacts are provided by Asn801 and Lys818.

It belongs to the prokaryotic molybdopterin-containing oxidoreductase family. NasA/NapA/NarB subfamily. Component of the periplasmic nitrate reductase NapAB complex composed of NapA and NapB. The cofactor is [4Fe-4S] cluster. Mo-bis(molybdopterin guanine dinucleotide) is required as a cofactor. Post-translationally, predicted to be exported by the Tat system. The position of the signal peptide cleavage has not been experimentally proven.

The protein localises to the periplasm. The enzyme catalyses 2 Fe(II)-[cytochrome] + nitrate + 2 H(+) = 2 Fe(III)-[cytochrome] + nitrite + H2O. Functionally, catalytic subunit of the periplasmic nitrate reductase complex NapAB. Receives electrons from NapB and catalyzes the reduction of nitrate to nitrite. The sequence is that of Periplasmic nitrate reductase from Glaesserella parasuis serovar 5 (strain SH0165) (Haemophilus parasuis).